The sequence spans 154 residues: Ribonuclease 8 (154 aa).

Residues 1–27 (MAPARAGCCPLLLLLLGLRVAQIPVSA) form the signal peptide. H42 serves as the catalytic Proton acceptor. Intrachain disulfides connect C64–C118, C82–C133, and C89–C96. Substrate is bound by residues 65-69 (KDLNT) and K90. H149 (proton donor) is an active-site residue.

Belongs to the pancreatic ribonuclease family.

It localises to the secreted. In terms of biological role, has a low ribonuclease activity. This Miopithecus talapoin (Angolan talapoin) protein is Ribonuclease 8 (RNASE8).